A 422-amino-acid polypeptide reads, in one-letter code: L-threonine dehydratase biosynthetic IlvA (422 aa).

K60 is subject to N6-(pyridoxal phosphate)lysine. Residues N87, G190–L194, and S315 contribute to the pyridoxal 5'-phosphate site. In terms of domain architecture, ACT-like spans H339–K413.

It belongs to the serine/threonine dehydratase family. As to quaternary structure, homotetramer. Pyridoxal 5'-phosphate is required as a cofactor.

The enzyme catalyses L-threonine = 2-oxobutanoate + NH4(+). It participates in amino-acid biosynthesis; L-isoleucine biosynthesis; 2-oxobutanoate from L-threonine: step 1/1. In terms of biological role, catalyzes the anaerobic formation of alpha-ketobutyrate and ammonia from threonine in a two-step reaction. The first step involved a dehydration of threonine and a production of enamine intermediates (aminocrotonate), which tautomerizes to its imine form (iminobutyrate). Both intermediates are unstable and short-lived. The second step is the nonenzymatic hydrolysis of the enamine/imine intermediates to form 2-ketobutyrate and free ammonia. In the low water environment of the cell, the second step is accelerated by RidA. This chain is L-threonine dehydratase biosynthetic IlvA (ilvA), found in Bacillus subtilis (strain 168).